The primary structure comprises 255 residues: Imidazole glycerol phosphate synthase subunit HisF (255 aa).

Catalysis depends on residues Asp-11 and Asp-130.

It belongs to the HisA/HisF family. Heterodimer of HisH and HisF.

The protein resides in the cytoplasm. It carries out the reaction 5-[(5-phospho-1-deoxy-D-ribulos-1-ylimino)methylamino]-1-(5-phospho-beta-D-ribosyl)imidazole-4-carboxamide + L-glutamine = D-erythro-1-(imidazol-4-yl)glycerol 3-phosphate + 5-amino-1-(5-phospho-beta-D-ribosyl)imidazole-4-carboxamide + L-glutamate + H(+). It functions in the pathway amino-acid biosynthesis; L-histidine biosynthesis; L-histidine from 5-phospho-alpha-D-ribose 1-diphosphate: step 5/9. In terms of biological role, IGPS catalyzes the conversion of PRFAR and glutamine to IGP, AICAR and glutamate. The HisF subunit catalyzes the cyclization activity that produces IGP and AICAR from PRFAR using the ammonia provided by the HisH subunit. This is Imidazole glycerol phosphate synthase subunit HisF from Maricaulis maris (strain MCS10) (Caulobacter maris).